A 462-amino-acid chain; its full sequence is L-seryl-tRNA(Sec) selenium transferase (462 aa).

Residue Lys-294 is modified to N6-(pyridoxal phosphate)lysine.

This sequence belongs to the SelA family. Homodecamer; pentamer of dimers. Binds only one seryl-tRNA(Sec) per dimer. Requires pyridoxal 5'-phosphate as cofactor.

It localises to the cytoplasm. The catalysed reaction is L-seryl-tRNA(Sec) + selenophosphate + H(+) = L-selenocysteinyl-tRNA(Sec) + phosphate. Its pathway is aminoacyl-tRNA biosynthesis; selenocysteinyl-tRNA(Sec) biosynthesis; selenocysteinyl-tRNA(Sec) from L-seryl-tRNA(Sec) (bacterial route): step 1/1. Functionally, converts seryl-tRNA(Sec) to selenocysteinyl-tRNA(Sec) required for selenoprotein biosynthesis. The sequence is that of L-seryl-tRNA(Sec) selenium transferase from Yersinia enterocolitica serotype O:8 / biotype 1B (strain NCTC 13174 / 8081).